The chain runs to 109 residues: Cytochrome c (109 aa).

Positions 25, 28, 29, and 88 each coordinate heme c.

It belongs to the cytochrome c family. Post-translationally, binds 1 heme c group covalently per subunit.

Its subcellular location is the mitochondrion intermembrane space. In terms of biological role, electron carrier protein. The oxidized form of the cytochrome c heme group can accept an electron from the heme group of the cytochrome c1 subunit of cytochrome reductase. Cytochrome c then transfers this electron to the cytochrome oxidase complex, the final protein carrier in the mitochondrial electron-transport chain. This Tetrahymena pyriformis protein is Cytochrome c.